The following is a 461-amino-acid chain: Transforming growth factor beta-1-induced transcript 1 protein (461 aa).

N-acetylmethionine is present on M1. The interval 1-87 is disordered; sequence MEDLDALLSD…PFSSSSGVLG (87 aa). Residues 1–200 are transcription activation; the sequence is MEDLDALLSD…GSPSPPEPTG (200 aa). The interaction with PTK2B/PYK2 stretch occupies residues 1-240; that stretch reads MEDLDALLSD…CNKPIAGQVV (240 aa). The LD motif 1 signature appears at 3–15; it reads DLDALLSDLETTT. T33 bears the Phosphothreonine mark. A Phosphotyrosine modification is found at Y38. Residues 40–52 show a composition bias toward polar residues; the sequence is HQPQTGSGESSGA. The residue at position 60 (Y60) is a Phosphotyrosine; by FAK2 and FYN. A Phosphoserine modification is found at S68. Positions 83–136 are interaction with PTK2/FAK1; the sequence is SGVLGTGLCELDRLLQELNATQFNITDEIMSQFPSSKVASGEQKEDQSEDKKRP. The short motif at 92 to 104 is the LD motif 2 element; sequence ELDRLLQELNATQ. Positions 116 to 152 are disordered; that stretch reads PSSKVASGEQKEDQSEDKKRPSLPSSPSPGLPKASAT. Residues 124 to 135 show a composition bias toward basic and acidic residues; it reads EQKEDQSEDKKR. 6 positions are modified to phosphoserine: S137, S140, S141, S143, S164, and S186. An LD motif 3 motif is present at residues 157 to 168; it reads ELDRLMASLSDF. The disordered stretch occupies residues 172–205; sequence NHLPASGPTQPPVVSSTNEGSPSPPEPTGKGSLD. The segment covering 183-192 has biased composition (polar residues); it reads PVVSSTNEGS. Position 188 is a phosphothreonine (T188). Phosphoserine is present on residues S192 and S194. Positions 203–215 match the LD motif 4 motif; it reads SLDTMLGLLQSDL. LIM zinc-binding domains are found at residues 226-285, 286-343, 344-403, and 404-461; these read GLCG…RFSP, RCGF…QLFA, PRCQ…RRGS, and LCAT…KLFG. Position 403 is a phosphoserine (S403). T407 carries the phosphothreonine modification.

This sequence belongs to the paxillin family. In terms of assembly, homooligomer. Interacts with PPARG. Interacts with TRAF4. Interacts with CRIP2. Interacts with HSPB1. Interacts with ILK. Interacts with LIMS1 and LIMS2. Interacts with NCK2. Interacts with NUDT16L1. Interacts with PAK. Interacts with PTPN12. Interacts with TCF3. Interacts with TCF7L2. Interacts with VCL. Interacts (via LD motif 3) with GIT1. Also interacts with GIT2. Forms a complex with ARHGEF7. Interacts with AR/androgen receptor in a ligand-dependent manner. Interacts with CSK. Interacts with PTK2/FAK1 and PTK2B/PYK2. Interacts with SLC6A3 and SLC6A4. Interacts with NR3C1. Interacts with SMAD3. Interacts with MAPK15. Interacts with SRC. Interacts with LYN. Interacts with talin. Interacts (via LIM zinc-binding domain 2) with CBLC (via RING-type zinc finger); the interaction is direct and enhances CBLC E3 ubiquitin-protein ligase activity. Interacts with PARVA. Interacts with PXN. In terms of processing, phosphorylated by gonadotropin-releasing hormone-activated SRC. As to expression, expressed in platelets, smooth muscle and prostate stromal cells (at protein level).

It is found in the cell junction. It localises to the focal adhesion. The protein localises to the nucleus matrix. Its subcellular location is the cytoplasm. The protein resides in the cytoskeleton. In terms of biological role, functions as a molecular adapter coordinating multiple protein-protein interactions at the focal adhesion complex and in the nucleus. Links various intracellular signaling modules to plasma membrane receptors and regulates the Wnt and TGFB signaling pathways. May also regulate SLC6A3 and SLC6A4 targeting to the plasma membrane hence regulating their activity. In the nucleus, functions as a nuclear receptor coactivator regulating glucocorticoid, androgen, mineralocorticoid and progesterone receptor transcriptional activity. May play a role in the processes of cell growth, proliferation, migration, differentiation and senescence. May have a zinc-dependent DNA-binding activity. The polypeptide is Transforming growth factor beta-1-induced transcript 1 protein (TGFB1I1) (Homo sapiens (Human)).